The sequence spans 357 residues: Putative DENN domain-containing protein 10 B (357 aa).

The uDENN domain maps to 1-140 (MAAAELADTQ…TKGICQSEEN (140 aa)). The region spanning 159 to 299 (IKDIVSQFGM…PEKSESQVIQ (141 aa)) is the cDENN domain. Positions 301-357 (IALKTREIFTNLAPFSEVSADGEKRVLNLEALKQKRFPPATENFLYHLAAAEQMLKI) constitute a dDENN domain.

It belongs to the DENND10 family.

It localises to the late endosome. May be a guanine nucleotide exchange factor (GEF). This Homo sapiens (Human) protein is Putative DENN domain-containing protein 10 B.